The chain runs to 448 residues: Ribosome biogenesis protein YTM1 (448 aa).

A ubiquitin-like (UBL) domain region spans residues threonine 5–glutamate 86. WD repeat units follow at residues proline 98–alanine 136, leucine 191–valine 230, serine 271–threonine 309, alanine 312–alanine 351, leucine 357–serine 397, and aspartate 403–glycine 439. The interval proline 225–isoleucine 261 is disordered.

Belongs to the WD repeat WDR12/YTM1 family. Component of the NOP7 complex, composed of ERB1, NOP7 and YTM1. The complex is held together by ERB1, which interacts with NOP7 via its N-terminal domain and with YTM1 via a high-affinity interaction between the seven-bladed beta-propeller domains of the 2 proteins. The NOP7 complex associates with the 66S pre-ribosome. Interacts (via UBL domain) with MDN1 (via VWFA/MIDAS domain).

The protein resides in the nucleus. The protein localises to the nucleolus. Its subcellular location is the nucleoplasm. Component of the NOP7 complex, which is required for maturation of the 25S and 5.8S ribosomal RNAs and formation of the 60S ribosome. This Coprinopsis cinerea (strain Okayama-7 / 130 / ATCC MYA-4618 / FGSC 9003) (Inky cap fungus) protein is Ribosome biogenesis protein YTM1.